The sequence spans 327 residues: MTPELLTVLLITGGILIFLAIFFTLVPIPLWISSLAAGVRVSIFTLVGMRLRRVTPSKIVNPLIKAVKAGINLNTNQLESHYLAGGNVDRVVNALIAAHRANIELSFERAAAIDLAGRNVLEAVQMSVNPKVIETPFIAGVAMNGIEVKAKARITVRANIDRLVGGAGEETVIARVGEGVISTIGSCQDQKEVLENPEMISRTVLAKGLDSGTAFEILSIDIADVDIGKNIGAVLQTDQAEADKNIAQAKAEERRAMAIASEQEMKSRVEEMRAKVVAAEAEVPLAIAEALRDGNFSVMDYANYLNVTADTKMRQAIGGQSSPNDTQ.

A run of 2 helical transmembrane segments spans residues 8-28 (VLLI…LVPI) and 29-49 (PLWI…LVGM).

Belongs to the flotillin-like FloA family. Homooligomerizes.

It is found in the cell membrane. It localises to the membrane raft. Its function is as follows. Found in functional membrane microdomains (FMM) that may be equivalent to eukaryotic membrane rafts. FMMs are highly dynamic and increase in number as cells age. Flotillins are thought to be important factors in membrane fluidity. The chain is Flotillin-like protein FloA from Exiguobacterium sibiricum (strain DSM 17290 / CCUG 55495 / CIP 109462 / JCM 13490 / 255-15).